Consider the following 499-residue polypeptide: Putative protease Do-like 12, mitochondrial (499 aa).

The transit peptide at methionine 1–serine 24 directs the protein to the mitochondrion. A serine protease region spans residues glycine 94–isoleucine 259. Residues histidine 110, aspartate 144, and serine 222 each act as charge relay system in the active site. The 85-residue stretch at glycine 272–arginine 356 folds into the PDZ domain.

Belongs to the peptidase S1C family.

It localises to the mitochondrion matrix. Functionally, putative serine protease. This is Putative protease Do-like 12, mitochondrial (DEGP12) from Arabidopsis thaliana (Mouse-ear cress).